The primary structure comprises 586 residues: Protein BONZAI 2 (586 aa).

Residue Gly2 is the site of N-myristoyl glycine attachment. C2 domains follow at residues 25–164 and 176–303; these read SAAT…ALEL and PQHN…NLAL. Positions 62, 68, 121, and 123 each coordinate Ca(2+). A VWFA domain is found at 344–563; the sequence is NFMVAIDFTA…SVVEALLAEL (220 aa).

Belongs to the copine family. As to quaternary structure, interacts with BAP1 and BAP2. The cofactor is Ca(2+). In terms of tissue distribution, expressed in roots, leaves and stems. Expressed in young growing tissues.

It is found in the cell membrane. In terms of biological role, negative regulator of cell death and defense responses. May repress a number of R genes and may have effects in promoting growth and development. May function in membrane trafficking and in fusion of vesicles with plasma membrane. This is Protein BONZAI 2 (BON2) from Arabidopsis thaliana (Mouse-ear cress).